A 1045-amino-acid chain; its full sequence is Elongation factor 3 (1045 aa).

ADP-binding residues include isoleucine 42, histidine 44, and serine 83. HEAT repeat units lie at residues proline 86–proline 123, alanine 125–serine 162, leucine 166–asparagine 203, leucine 171–phenylalanine 209, aspartate 205–proline 241, alanine 242–aspartate 279, and proline 285–valine 323. Residues threonine 392 and histidine 396 each contribute to the ADP site. ABC transporter domains lie at glutamate 426–leucine 641 and valine 667–aspartate 993. ADP is bound by residues asparagine 703, glutamate 922, asparagine 925, and histidine 951. The disordered stretch occupies residues glycine 975–phenylalanine 1045. The span at arginine 1020 to lysine 1031 shows a compositional bias: basic residues.

Belongs to the ABC transporter superfamily. ABCF family. EF3 subfamily.

It localises to the cytoplasm. Its subcellular location is the cytosol. The enzyme catalyses ATP + H2O = ADP + phosphate + H(+). The protein operates within protein biosynthesis; polypeptide chain elongation. In terms of biological role, ribosome-dependent ATPase that functions in cytoplasmic translation elongation. Required for the ATP-dependent release of deacylated tRNA from the ribosomal E-site during protein biosynthesis. Stimulates the eEF1A-dependent binding of aminoacyl-tRNA to the ribosomal A-site, which has reduced affinity for tRNA as long as the E-site is occupied. Assists translation termination by stimulating the release of nascent protein from the ribosome by release factors. The chain is Elongation factor 3 from Zygosaccharomyces rouxii (strain ATCC 2623 / CBS 732 / NBRC 1130 / NCYC 568 / NRRL Y-229).